Reading from the N-terminus, the 410-residue chain is Transcription factor E2F4 (410 aa).

The disordered stretch occupies residues 1–20 (MAEAGPQAPPPPGTPSRHEK). Alanine 2 is modified (N-acetylalanine). A DNA-binding region spans residues 16–85 (SRHEKSLGLL…KNSIQWKGVG (70 aa)). Residues 43–65 (LKLAADTLAVRQKRRIYDITNVL) form a leucine-zipper region. The short motif at 48-85 (DTLAVRQKRRIYDITNVLEGIGLIEKKSKNSIQWKGVG) is the DEF box element. The dimerization stretch occupies residues 86 to 181 (PGCNTREIAD…GLNGQKKYQI (96 aa)). Disordered regions lie at residues 203-258 (PPVA…GSTQ) and 303-341 (SALL…DPTG). Composition is skewed to low complexity over residues 231–252 (PALA…TPTP) and 308–324 (SSSS…SSSS). Residues 334 to 410 (PIKADPTGVL…DLFDVPVLKL (77 aa)) form a transactivation region. Serine 381 is subject to Phosphoserine. An HCFC1-binding-motif (HBM) motif is present at residues 386-389 (DHDY). The interaction with RBL1 and RBL2 stretch occupies residues 387–404 (HDYIYNLDESEGVCDLFD).

It belongs to the E2F/DP family. As to quaternary structure, component of the DRTF1/E2F transcription factor complex. Binds cooperatively with TFDP1/Dp-1 to E2F sites. The E2F4/TFDP1 dimer interacts preferentially with pocket protein RBL1, which inhibits the E2F transactivation domain. Lower affinity interaction has been found with retinoblastoma protein RB1. Interacts with TRRAP, which probably mediates its interaction with histone acetyltransferase complexes, leading to transcription activation. Interacts with HCFC1. Component of the DREAM complex (also named LINC complex) at least composed of E2F4, E2F5, LIN9, LIN37, LIN52, LIN54, MYBL1, MYBL2, RBL1, RBL2, RBBP4, TFDP1 and TFDP2. The complex exists in quiescent cells where it represses cell cycle-dependent genes. It dissociates in S phase when LIN9, LIN37, LIN52 and LIN54 form a subcomplex that binds to MYBL2. Interacts with PML. Interacts with CEBPA (when phosphorylated). Differentially phosphorylated in vivo.

The protein resides in the nucleus. Its function is as follows. Transcription activator that binds DNA cooperatively with DP proteins through the E2 recognition site, 5'-TTTC[CG]CGC-3' found in the promoter region of a number of genes whose products are involved in cell cycle regulation or in DNA replication. The DRTF1/E2F complex functions in the control of cell-cycle progression from G1 to S phase. E2F4 binds with high affinity to RBL1 and RBL2. In some instances can also bind RB1. Specifically required for multiciliate cell differentiation: together with MCIDAS and E2F5, binds and activate genes required for centriole biogenesis. In Mus musculus (Mouse), this protein is Transcription factor E2F4 (E2f4).